Consider the following 325-residue polypeptide: Beta-ketoacyl-[acyl-carrier-protein] synthase III (325 aa).

Active-site residues include Cys116 and His252. The interval 253–257 (QANLR) is ACP-binding. The active site involves Asn282.

The protein belongs to the thiolase-like superfamily. FabH family. Homodimer.

The protein localises to the cytoplasm. It carries out the reaction malonyl-[ACP] + acetyl-CoA + H(+) = 3-oxobutanoyl-[ACP] + CO2 + CoA. Its pathway is lipid metabolism; fatty acid biosynthesis. In terms of biological role, catalyzes the condensation reaction of fatty acid synthesis by the addition to an acyl acceptor of two carbons from malonyl-ACP. Catalyzes the first condensation reaction which initiates fatty acid synthesis and may therefore play a role in governing the total rate of fatty acid production. Possesses both acetoacetyl-ACP synthase and acetyl transacylase activities. Its substrate specificity determines the biosynthesis of branched-chain and/or straight-chain of fatty acids. The polypeptide is Beta-ketoacyl-[acyl-carrier-protein] synthase III (Xanthomonas axonopodis pv. citri (strain 306)).